A 201-amino-acid polypeptide reads, in one-letter code: 3-isopropylmalate dehydratase small subunit (201 aa).

Belongs to the LeuD family. LeuD type 1 subfamily. Heterodimer of LeuC and LeuD.

The enzyme catalyses (2R,3S)-3-isopropylmalate = (2S)-2-isopropylmalate. It functions in the pathway amino-acid biosynthesis; L-leucine biosynthesis; L-leucine from 3-methyl-2-oxobutanoate: step 2/4. In terms of biological role, catalyzes the isomerization between 2-isopropylmalate and 3-isopropylmalate, via the formation of 2-isopropylmaleate. This Shewanella denitrificans (strain OS217 / ATCC BAA-1090 / DSM 15013) protein is 3-isopropylmalate dehydratase small subunit.